A 418-amino-acid polypeptide reads, in one-letter code: Vacuole membrane protein HFL1 (418 aa).

Residues 1-5 (MENKL) lie on the Extracellular side of the membrane. A helical transmembrane segment spans residues 6–26 (LCWWLYWPCVYSSIIATIISF). At 27 to 43 (YTITRHLLNYRKPYEQR) the chain is on the cytoplasmic side. Residues 44–64 (LSIRILLLVPIFSVSCASGII) traverse the membrane as a helical segment. Over 65–78 (KPEAAQFYVDPIRE) the chain is Extracellular. A helical membrane pass occupies residues 79–99 (FYEAFVIYTFFTFLTLLLGGE). At 100–141 (RNIITVLSLNHAPTRHPIPLIGKICKPIDLSDPFDFLFVKKG) the chain is on the cytoplasmic side. The helical transmembrane segment at 142–162 (ILQYVWFKPFYCFGTLICSAW) threads the bilayer. At 163–168 (KLPKFE) the chain is on the extracellular side. A helical membrane pass occupies residues 169–189 (IFLNVFYNISVTWSLYSLALF). Residues 190 to 205 (WKCLYPELTPYKPWLK) are Cytoplasmic-facing. The chain crosses the membrane as a helical span at residues 206–226 (FLCVKLIIFASYWQSIIIQGL). Residues 227–246 (VVTGKLGTGNQDRTSGYVYK) are Extracellular-facing. A helical transmembrane segment spans residues 247–267 (NGLLCIEMVPFAILHAVAFPW). Over 268–418 (NKYTAFSIPY…DVQSRSSMAC (151 aa)) the chain is Cytoplasmic. An ATG8-interacting region region spans residues 379–402 (RTFPEDPNYPVVHDYTMGHRYSRS).

The protein belongs to the TMEM184 family. Interacts with ATG8.

The protein resides in the vacuole membrane. Its function is as follows. Vacuole membrane protein that recruits ATG8 to facilitate the degradation of vacuolar integral membrane proteins during early-stationary vacuole turnover (EVT) when cells enter stationary phase. This Saccharomyces cerevisiae (strain ATCC 204508 / S288c) (Baker's yeast) protein is Vacuole membrane protein HFL1.